The following is a 483-amino-acid chain: Myosin-binding protein H (483 aa).

The segment covering 1-15 (MTGKATSEASVSTPE) has biased composition (polar residues). A disordered region spans residues 1–78 (MTGKATSEAS…PEPPSEDVPS (78 aa)). A phosphothreonine mark is found at Thr2, Thr6, and Thr26. Positions 41 to 66 (QEQAPEPQKPQAQDPAAPAASAMPAA) are enriched in low complexity. In terms of domain architecture, Fibronectin type-III 1 spans 79 to 174 (APLRLTLEDV…LDQPVHIQEI (96 aa)). An Ig-like C2-type 1 domain is found at 178 to 266 (PKIRVPRHLR…EGLEAKASID (89 aa)). One can recognise a Fibronectin type-III 2 domain in the interval 275–370 (PPSSIKLLDV…TKELAHIHKA (96 aa)). In terms of domain architecture, Ig-like C2-type 2 spans 388 to 472 (PSFTQPLADH…INVLGEASVD (85 aa)).

This sequence belongs to the immunoglobulin superfamily. MyBP family. In terms of tissue distribution, skeletal muscle. Expressed at low levels in heart ventricles.

Binds to myosin; probably involved in interaction with thick myofilaments in the A-band. The polypeptide is Myosin-binding protein H (Mybph) (Mus musculus (Mouse)).